We begin with the raw amino-acid sequence, 854 residues long: Translation initiation factor IF-2 (854 aa).

Disordered stretches follow at residues 52 to 79 (RQHG…RDGG) and 128 to 265 (RKQE…HGFQ). Positions 61–75 (SQRITLQRKTTSTLS) are enriched in polar residues. Composition is skewed to basic and acidic residues over residues 128–150 (RKQE…RQEA) and 211–232 (VRHD…DNKR). Basic residues predominate over residues 247–257 (RGKLGRKNKKP). One can recognise a tr-type G domain in the interval 354–523 (KRAPVVTVMG…LLQAEVLELT (170 aa)). The tract at residues 363–370 (GHVDHGKT) is G1. Position 363-370 (363-370 (GHVDHGKT)) interacts with GTP. The G2 stretch occupies residues 388-392 (GITQH). A G3 region spans residues 409–412 (DTPG). Residue 409 to 413 (DTPGH) coordinates GTP. A G4 region spans residues 463–466 (TKID). Residues 499–501 (SAK) form a G5 region.

The protein belongs to the TRAFAC class translation factor GTPase superfamily. Classic translation factor GTPase family. IF-2 subfamily.

Its subcellular location is the cytoplasm. In terms of biological role, one of the essential components for the initiation of protein synthesis. Protects formylmethionyl-tRNA from spontaneous hydrolysis and promotes its binding to the 30S ribosomal subunits. Also involved in the hydrolysis of GTP during the formation of the 70S ribosomal complex. This chain is Translation initiation factor IF-2, found in Marinomonas sp. (strain MWYL1).